We begin with the raw amino-acid sequence, 449 residues long: Putative transporter C83.11 (449 aa).

The next 9 helical transmembrane spans lie at 7 to 27 (LSHILFHEKVGFLLLCLLWYI), 47 to 67 (VTLTFLQFGFVAFFSAVCLLF), 84 to 104 (VLYTTLPLSIFQIGGHVFGSL), 109 to 129 (IPVSTVHTVKALSPLFTVLAY), 136 to 156 (VYSAMTYFSLVPLTFGVTLAC), 164 to 184 (IVGLLYALISTCIFVSQNIFG), 205 to 225 (LNLLLYSSGVAFIVMIPVWLY), 255 to 275 (ILAFTLLSIISPVAYSIASLI), and 278 to 298 (IFVIVVSIIWFQQATNFTQGS). Phosphoserine occurs at positions 348 and 352. Residue Tyr355 is modified to Phosphotyrosine. The segment covering 382–415 (NSVYSNEGVTSSVSGNATPASVRQSTQNDFSNSN) has biased composition (polar residues). Positions 382–416 (NSVYSNEGVTSSVSGNATPASVRQSTQNDFSNSNI) are disordered.

It belongs to the TPT transporter family.

The protein resides in the membrane. The polypeptide is Putative transporter C83.11 (Schizosaccharomyces pombe (strain 972 / ATCC 24843) (Fission yeast)).